Reading from the N-terminus, the 428-residue chain is Histone-lysine N-methyltransferase SMYD3 (428 aa).

Met-1 carries the post-translational modification N-acetylmethionine. Positions 4–240 (LKVEKFATAK…VGEELTICYL (237 aa)) constitute an SET domain. 14 to 16 (RGN) contributes to the S-adenosyl-L-methionine binding site. Phosphothreonine is present on Thr-22. Residues Cys-49, Cys-52, Cys-62, Cys-65, Cys-71, Cys-75, His-83, and Cys-87 each coordinate Zn(2+). The MYND-type zinc finger occupies 49 to 87 (CDRCLLGKEKLMRCSQCRVAKYCSAKCQKKAWPDHKREC). S-adenosyl-L-methionine is bound by residues Tyr-124, Asn-132, Asn-181, 205–206 (NH), Tyr-239, and Phe-259. The interval 272–428 (DADMLTGDEQ…EECDANIRAS (157 aa)) is C-terminal domain; essential for histone methyltransferase activity, nuclear localization and mediates interaction with HSP90AA1.

The protein belongs to the class V-like SAM-binding methyltransferase superfamily. Histone-lysine methyltransferase family. Interacts with HSPCA. Interacts with HELZ. Interacts with POLR2A; the interaction may be indirect and may be mediated by HELZ. Interacts with HSP90AA1; this interaction enhances SMYD3 histone-lysine N-methyltransferase. In terms of tissue distribution, expressed in skeletal muscles and testis. Overexpressed in a majority of colorectal and hepatocellular carcinomas.

It localises to the cytoplasm. Its subcellular location is the nucleus. The enzyme catalyses L-lysyl(4)-[histone H3] + 3 S-adenosyl-L-methionine = N(6),N(6),N(6)-trimethyl-L-lysyl(4)-[histone H3] + 3 S-adenosyl-L-homocysteine + 3 H(+). Histone methyltransferase activity strongly stimulated by HSPCA. Histone methyltransferase. Specifically methylates 'Lys-4' of histone H3, inducing di- and tri-methylation, but not monomethylation. Also methylates 'Lys-5' of histone H4. Plays an important role in transcriptional activation as a member of an RNA polymerase complex. Binds DNA containing 5'-CCCTCC-3' or 5'-GAGGGG-3' sequences. The polypeptide is Histone-lysine N-methyltransferase SMYD3 (SMYD3) (Homo sapiens (Human)).